Reading from the N-terminus, the 264-residue chain is Thymidylate synthase (264 aa).

Position 21 (Arg-21) interacts with dUMP. Residue His-51 coordinates (6R)-5,10-methylene-5,6,7,8-tetrahydrofolate. 126–127 (RR) provides a ligand contact to dUMP. Residue Cys-146 is the Nucleophile of the active site. DUMP is bound by residues 166-169 (RSCD), Asn-177, and 207-209 (HLY). Residue Asp-169 coordinates (6R)-5,10-methylene-5,6,7,8-tetrahydrofolate. Ala-263 contacts (6R)-5,10-methylene-5,6,7,8-tetrahydrofolate.

It belongs to the thymidylate synthase family. Bacterial-type ThyA subfamily. As to quaternary structure, homodimer.

It is found in the cytoplasm. It catalyses the reaction dUMP + (6R)-5,10-methylene-5,6,7,8-tetrahydrofolate = 7,8-dihydrofolate + dTMP. The protein operates within pyrimidine metabolism; dTTP biosynthesis. Its function is as follows. Catalyzes the reductive methylation of 2'-deoxyuridine-5'-monophosphate (dUMP) to 2'-deoxythymidine-5'-monophosphate (dTMP) while utilizing 5,10-methylenetetrahydrofolate (mTHF) as the methyl donor and reductant in the reaction, yielding dihydrofolate (DHF) as a by-product. This enzymatic reaction provides an intracellular de novo source of dTMP, an essential precursor for DNA biosynthesis. This Shigella flexneri serotype 5b (strain 8401) protein is Thymidylate synthase.